Consider the following 224-residue polypeptide: Ribonuclease HII (224 aa).

The RNase H type-2 domain occupies 1 to 210; that stretch reads MKVAGADEAG…AKKIEEKFKR (210 aa). A divalent metal cation-binding residues include aspartate 7, glutamate 8, and aspartate 105.

This sequence belongs to the RNase HII family. Requires Mn(2+) as cofactor. It depends on Mg(2+) as a cofactor.

Its subcellular location is the cytoplasm. It carries out the reaction Endonucleolytic cleavage to 5'-phosphomonoester.. In terms of biological role, endonuclease that specifically degrades the RNA of RNA-DNA hybrids. This is Ribonuclease HII (rnhB) from Pyrococcus abyssi (strain GE5 / Orsay).